Reading from the N-terminus, the 191-residue chain is Protein GrpE (191 aa).

Basic and acidic residues-rich tracts occupy residues 1–19 (MKDE…EPES) and 29–45 (QQGE…GEIK). Positions 1 to 45 (MKDEHNQEHDHLSPKEPESYQKAYACKEQQGEEKQEASEKEGEIK) are disordered.

The protein belongs to the GrpE family. As to quaternary structure, homodimer.

Its subcellular location is the cytoplasm. Functionally, participates actively in the response to hyperosmotic and heat shock by preventing the aggregation of stress-denatured proteins, in association with DnaK and GrpE. It is the nucleotide exchange factor for DnaK and may function as a thermosensor. Unfolded proteins bind initially to DnaJ; upon interaction with the DnaJ-bound protein, DnaK hydrolyzes its bound ATP, resulting in the formation of a stable complex. GrpE releases ADP from DnaK; ATP binding to DnaK triggers the release of the substrate protein, thus completing the reaction cycle. Several rounds of ATP-dependent interactions between DnaJ, DnaK and GrpE are required for fully efficient folding. In Helicobacter pylori (strain J99 / ATCC 700824) (Campylobacter pylori J99), this protein is Protein GrpE.